We begin with the raw amino-acid sequence, 390 residues long: 8-amino-7-oxononanoate synthase (390 aa).

R19 lines the substrate pocket. 106–107 (GY) serves as a coordination point for pyridoxal 5'-phosphate. H131 is a substrate binding site. S176, H204, and T233 together coordinate pyridoxal 5'-phosphate. Position 236 is an N6-(pyridoxal phosphate)lysine (K236). T350 provides a ligand contact to substrate.

This sequence belongs to the class-II pyridoxal-phosphate-dependent aminotransferase family. BioF subfamily. In terms of assembly, homodimer. The cofactor is pyridoxal 5'-phosphate.

The catalysed reaction is 6-carboxyhexanoyl-[ACP] + L-alanine + H(+) = (8S)-8-amino-7-oxononanoate + holo-[ACP] + CO2. Its pathway is cofactor biosynthesis; biotin biosynthesis. Its function is as follows. Catalyzes the decarboxylative condensation of pimeloyl-[acyl-carrier protein] and L-alanine to produce 8-amino-7-oxononanoate (AON), [acyl-carrier protein], and carbon dioxide. The polypeptide is 8-amino-7-oxononanoate synthase (Pseudomonas entomophila (strain L48)).